The primary structure comprises 556 residues: 2-succinyl-5-enolpyruvyl-6-hydroxy-3-cyclohexene-1-carboxylate synthase (556 aa).

It belongs to the TPP enzyme family. MenD subfamily. In terms of assembly, homodimer. It depends on Mg(2+) as a cofactor. The cofactor is Mn(2+). Requires thiamine diphosphate as cofactor.

It catalyses the reaction isochorismate + 2-oxoglutarate + H(+) = 5-enolpyruvoyl-6-hydroxy-2-succinyl-cyclohex-3-ene-1-carboxylate + CO2. Its pathway is quinol/quinone metabolism; 1,4-dihydroxy-2-naphthoate biosynthesis; 1,4-dihydroxy-2-naphthoate from chorismate: step 2/7. The protein operates within quinol/quinone metabolism; menaquinone biosynthesis. In terms of biological role, catalyzes the thiamine diphosphate-dependent decarboxylation of 2-oxoglutarate and the subsequent addition of the resulting succinic semialdehyde-thiamine pyrophosphate anion to isochorismate to yield 2-succinyl-5-enolpyruvyl-6-hydroxy-3-cyclohexene-1-carboxylate (SEPHCHC). The chain is 2-succinyl-5-enolpyruvyl-6-hydroxy-3-cyclohexene-1-carboxylate synthase from Klebsiella pneumoniae (strain 342).